The primary structure comprises 510 residues: Probable lipid II flippase MurJ (510 aa).

Helical transmembrane passes span 13 to 33, 81 to 101, 130 to 150, 154 to 174, 182 to 202, 240 to 260, 266 to 286, 315 to 335, 357 to 377, 396 to 416, 443 to 463, and 481 to 501; these read DVVI…LFAN, GLVS…AALF, FPYL…NTIG, VMSF…LFLA, LALA…QIPF, INLL…ISWL, LLEF…LPTL, IFLL…PMLL, AFNA…GYYA, MGFN…ASAM, VFFV…WYYV, and LVWL…LLGV.

The protein belongs to the MurJ/MviN family.

It is found in the cell inner membrane. The protein operates within cell wall biogenesis; peptidoglycan biosynthesis. Involved in peptidoglycan biosynthesis. Transports lipid-linked peptidoglycan precursors from the inner to the outer leaflet of the cytoplasmic membrane. This Haemophilus influenzae (strain ATCC 51907 / DSM 11121 / KW20 / Rd) protein is Probable lipid II flippase MurJ.